Consider the following 1343-residue polypeptide: DNA-directed RNA polymerase subunit beta (1343 aa).

This sequence belongs to the RNA polymerase beta chain family. In terms of assembly, the RNAP catalytic core consists of 2 alpha, 1 beta, 1 beta' and 1 omega subunit. When a sigma factor is associated with the core the holoenzyme is formed, which can initiate transcription.

It catalyses the reaction RNA(n) + a ribonucleoside 5'-triphosphate = RNA(n+1) + diphosphate. Functionally, DNA-dependent RNA polymerase catalyzes the transcription of DNA into RNA using the four ribonucleoside triphosphates as substrates. This chain is DNA-directed RNA polymerase subunit beta, found in Shewanella loihica (strain ATCC BAA-1088 / PV-4).